The following is a 20-amino-acid chain: Agglutinin beta-3 chain (20 aa).

The segment at 1–20 (GPNGKSQSIIVGPWGDRVTN) is disordered.

The protein belongs to the jacalin lectin family. As to quaternary structure, formed of four alpha chains and four beta chains.

Functionally, D-galactose-specific lectin, binds the T-antigen structure Gal-beta1,3-GalNAc. The chain is Agglutinin beta-3 chain from Maclura pomifera (Osage orange).